A 246-amino-acid chain; its full sequence is LexA repressor (246 aa).

The segment at 1-34 is disordered; it reads MATPQTGKKTPSRRVSELPDGPPDATGLTPRQQR. Positions 52–72 form a DNA-binding region, H-T-H motif; the sequence is MREIGEAVGLTSSSSVAHQLK. Active-site for autocatalytic cleavage activity residues include Ser-170 and Lys-207.

It belongs to the peptidase S24 family. As to quaternary structure, homodimer.

The catalysed reaction is Hydrolysis of Ala-|-Gly bond in repressor LexA.. Its function is as follows. Represses a number of genes involved in the response to DNA damage (SOS response), including recA and lexA. In the presence of single-stranded DNA, RecA interacts with LexA causing an autocatalytic cleavage which disrupts the DNA-binding part of LexA, leading to derepression of the SOS regulon and eventually DNA repair. The protein is LexA repressor of Nocardioides sp. (strain ATCC BAA-499 / JS614).